Consider the following 193-residue polypeptide: ATP-dependent Clp protease proteolytic subunit (193 aa).

Ser-97 acts as the Nucleophile in catalysis. His-122 is a catalytic residue.

This sequence belongs to the peptidase S14 family. In terms of assembly, fourteen ClpP subunits assemble into 2 heptameric rings which stack back to back to give a disk-like structure with a central cavity, resembling the structure of eukaryotic proteasomes.

It localises to the cytoplasm. It carries out the reaction Hydrolysis of proteins to small peptides in the presence of ATP and magnesium. alpha-casein is the usual test substrate. In the absence of ATP, only oligopeptides shorter than five residues are hydrolyzed (such as succinyl-Leu-Tyr-|-NHMec, and Leu-Tyr-Leu-|-Tyr-Trp, in which cleavage of the -Tyr-|-Leu- and -Tyr-|-Trp bonds also occurs).. Cleaves peptides in various proteins in a process that requires ATP hydrolysis. Has a chymotrypsin-like activity. Plays a major role in the degradation of misfolded proteins. This is ATP-dependent Clp protease proteolytic subunit from Fusobacterium nucleatum subsp. nucleatum (strain ATCC 25586 / DSM 15643 / BCRC 10681 / CIP 101130 / JCM 8532 / KCTC 2640 / LMG 13131 / VPI 4355).